The primary structure comprises 363 residues: LIM and cysteine-rich domains protein 1 (363 aa).

The residue at position 16 (S16) is a Phosphoserine. One can recognise a PET domain in the interval 99–206 (MIMTNPIATG…GEVALPGQGG (108 aa)). Residues 200 to 233 (ALPGQGGLPKEEGKQQEKPEGAETAAPTANGSLG) form a disordered region. Residues 208–220 (PKEEGKQQEKPEG) are compositionally biased toward basic and acidic residues. 2 consecutive LIM zinc-binding domains span residues 239–304 (YVCE…SLRP) and 305–363 (RCSG…SKRT).

As to quaternary structure, interacts with beta-dystroglycan. Interacts with GATA1, GATA4 and GATA6. In terms of tissue distribution, highly expressed in both skeletal muscle and cardiac muscle.

The protein localises to the cytoplasm. Its subcellular location is the nucleus. In terms of biological role, transcriptional cofactor that restricts GATA6 function by inhibiting DNA-binding, resulting in repression of GATA6 transcriptional activation of downstream target genes. Represses GATA6-mediated trans activation of lung- and cardiac tissue-specific promoters. Inhibits DNA-binding by GATA4 and GATA1 to the cTNC promoter. Plays a critical role in the development of cardiac hypertrophy via activation of calcineurin/nuclear factor of activated T-cells signaling pathway. This Sus scrofa (Pig) protein is LIM and cysteine-rich domains protein 1 (LMCD1).